We begin with the raw amino-acid sequence, 118 residues long: MIGVDIVSIARIEKCVKRFEMRFLERFLSPSEIVLCKDKFSSIAGFFALKEACSKALQVGIGKELSFLDMHISKSPKNAPLITLSKEKMDYFNIQSLSASISHDAGFAIAVVMVSSSN.

The Mg(2+) site is built by Asp-5 and Glu-51.

Belongs to the P-Pant transferase superfamily. AcpS family. Requires Mg(2+) as cofactor.

It localises to the cytoplasm. The catalysed reaction is apo-[ACP] + CoA = holo-[ACP] + adenosine 3',5'-bisphosphate + H(+). Its function is as follows. Transfers the 4'-phosphopantetheine moiety from coenzyme A to a Ser of acyl-carrier-protein. The chain is Holo-[acyl-carrier-protein] synthase from Helicobacter pylori (strain P12).